A 172-amino-acid polypeptide reads, in one-letter code: MLSSLANPRQAASQLLNFALILSTAFMMWKGLSVVSDSPSPIVVVLSGSMEPAFQRGDLLFLWNRNIIQETEVGEIVVYEVRGKNIPIVHRVVRKFGAGSEAKLLTKGDNNQGSDEELYAKDQDFLVRKDIIGSVVAYIPFVGYVTILLSEYPWLKTAMLGIMGLVVVLQRE.

The Cytoplasmic portion of the chain corresponds to 1–14 (MLSSLANPRQAASQ). Residues 15-35 (LLNFALILSTAFMMWKGLSVV) traverse the membrane as a helical; Signal-anchor for type II membrane protein segment. Residues 36–172 (SDSPSPIVVV…MGLVVVLQRE (137 aa)) are Lumenal-facing. Residues S49, H90, and D115 each act as charge relay system in the active site. The segment at 158–169 (AMLGIMGLVVVL) is C-terminal short (CTS) helix.

The protein belongs to the peptidase S26B family. In terms of assembly, component of the signal peptidase complex (SPC) composed of a catalytic subunit SEC11 and three accessory subunits SPC1, SPC2 and SPC3. The complex induces a local thinning of the ER membrane which is used to measure the length of the signal peptide (SP) h-region of protein substrates. This ensures the selectivity of the complex towards h-regions shorter than 18-20 amino acids. SPC associates with the translocon complex.

The protein localises to the endoplasmic reticulum membrane. The catalysed reaction is Cleavage of hydrophobic, N-terminal signal or leader sequences from secreted and periplasmic proteins.. Its function is as follows. Catalytic component of the signal peptidase complex (SPC) which catalyzes the cleavage of N-terminal signal sequences from nascent proteins as they are translocated into the lumen of the endoplasmic reticulum. Specifically cleaves N-terminal signal peptides that contain a hydrophobic alpha-helix (h-region) shorter than 18-20 amino acids. This is Signal peptidase complex catalytic subunit SEC11 (SEC11) from Colletotrichum graminicola (strain M1.001 / M2 / FGSC 10212) (Maize anthracnose fungus).